A 369-amino-acid polypeptide reads, in one-letter code: MIKQFAVSLLLVLLTLVTTTASAERIRDLTTVQGVRENALIGYGLVVGLDGTGDQTTQTPFTTQSLSNMLSQLGITVPPGTNMQLKNVAAVMVTAKLPPFGRAGQNIDVVVSSLGNAKSLRGGTLLMTPLKGVDNQVYALAQGNILVGGAGASAGGSSVKVNQLAGGRISNGAVIERELPTQFGENGVLNLQLNNEDFSLAQQISDTINRTDGTGTATPLDARTVQLRMPRDKSAQVKFLSHVQNLTVRVDVGDAKVIVNSRTGSVVMNRNVMLDSCAVAQGNLSVIVDNQVVVSQPNTPLAGGSTVVTRNPAVAVREQNGALQQVNASASLSQVIQALNALGATPNDLMSILQAMESAGCLRAKLEII.

A signal peptide spans 1–23 (MIKQFAVSLLLVLLTLVTTTASA).

This sequence belongs to the FlgI family. The basal body constitutes a major portion of the flagellar organelle and consists of four rings (L,P,S, and M) mounted on a central rod.

Its subcellular location is the periplasm. It localises to the bacterial flagellum basal body. Its function is as follows. Assembles around the rod to form the L-ring and probably protects the motor/basal body from shearing forces during rotation. In Photorhabdus laumondii subsp. laumondii (strain DSM 15139 / CIP 105565 / TT01) (Photorhabdus luminescens subsp. laumondii), this protein is Flagellar P-ring protein.